The following is an 824-amino-acid chain: Fibroblast growth factor receptor 2 (824 aa).

The N-terminal stretch at 1–21 is a signal peptide; it reads MFSWSYLMGLVMVATATLSLA. Over 22 to 374 the chain is Extracellular; it reads RPSYNIAEDT…LDSSSSEYTE (353 aa). One can recognise an Ig-like C2-type 1 domain in the interval 25-125; that stretch reads YNIAEDTTLE…ETRYFIVNIT (101 aa). C62 and C107 are disulfide-bonded. N-linked (GlcNAc...) asparagine glycosylation is found at N83, N123, and N128. The interval 125–152 is disordered; the sequence is TDGNSSGDDEDDNDGSEDFTNDNNHKRA. Positions 131–144 are enriched in acidic residues; sequence GDDEDDNDGSEDFT. Ig-like C2-type domains are found at residues 153–246 and 254–356; these read PYWT…YHLD and PPIL…AWLT. Residues 160–177 form a heparin-binding region; sequence KLEKKLHAVPAANTVKFR. The cysteines at positions 178 and 230 are disulfide-linked. N-linked (GlcNAc...) asparagine glycans are attached at residues N227, N240, N264, N295, N316, and N329. A disulfide bridge connects residues C277 and C340. A helical transmembrane segment spans residues 375–395; that stretch reads IAIYCVGGFLIACMIGTIMMC. Topologically, residues 396 to 824 are cytoplasmic; it reads HMKGRGKKSD…PLKHEATQPA (429 aa). At Y463 the chain carries Phosphotyrosine; by autocatalysis. Residues 478–767 form the Protein kinase domain; sequence LTLGKPLGEG…LTQTTNEEYL (290 aa). ATP is bound by residues 484-492, K514, 562-564, and N568; these read LGEGCFGQV and EYA. Position 583 is a phosphotyrosine; by autocatalysis (Y583). D623 (proton acceptor) is an active-site residue. 3 positions are modified to phosphotyrosine; by autocatalysis: Y653, Y654, and Y766. The tract at residues 801–824 is disordered; it reads SMNLAFPNPNTQMAPLKHEATQPA.

It belongs to the protein kinase superfamily. Tyr protein kinase family. Fibroblast growth factor receptor subfamily. Monomer. Homodimer after ligand binding. In terms of processing, autophosphorylated. Binding of FGF family members together with heparan sulfate proteoglycan or heparin promotes receptor dimerization and autophosphorylation on tyrosine residues. Autophosphorylation occurs in trans between the two FGFR molecules present in the dimer. N-glycosylated in the endoplasmic reticulum. The N-glycan chains undergo further maturation to an Endo H-resistant form in the Golgi apparatus. Post-translationally, ubiquitinated. FGFR2 is rapidly ubiquitinated after autophosphorylation, leading to internalization and degradation. Subject to degradation both in lysosomes and by the proteasome.

The protein resides in the cell membrane. It localises to the golgi apparatus. It is found in the cytoplasmic vesicle. The enzyme catalyses L-tyrosyl-[protein] + ATP = O-phospho-L-tyrosyl-[protein] + ADP + H(+). Its activity is regulated as follows. Present in an inactive conformation in the absence of bound ligand. Ligand binding leads to dimerization and activation by autophosphorylation on tyrosine residues. Tyrosine-protein kinase that acts as a cell-surface receptor for fibroblast growth factors and plays an essential role in the regulation of cell proliferation, differentiation, migration and apoptosis, and in the regulation of embryonic development. Required for normal embryonic patterning, limb bud development, lung morphogenesis, osteogenesis and skin development. Plays an essential role in the regulation of osteoblast differentiation, proliferation and apoptosis, and is required for normal skeleton development. Promotes cell proliferation in keratinocytes and immature osteoblasts, but promotes apoptosis in differentiated osteoblasts. Phosphorylates PLCG1, FRS2 and PAK4. Ligand binding leads to the activation of several signaling cascades. Activation of PLCG1 leads to the production of the cellular signaling molecules diacylglycerol and inositol 1,4,5-trisphosphate. Phosphorylation of FRS2 triggers recruitment of GRB2, GAB1, PIK3R1 and SOS1, and mediates activation of RAS, MAPK1/ERK2, MAPK3/ERK1 and the MAP kinase signaling pathway, as well as of the AKT1 signaling pathway. FGFR2 signaling is down-regulated by ubiquitination, internalization and degradation. Mutations that lead to constitutive kinase activation or impair normal FGFR2 maturation, internalization and degradation lead to aberrant signaling. Over-expressed FGFR2 promotes activation of STAT1. This is Fibroblast growth factor receptor 2 (FGFR2) from Pleurodeles waltl (Iberian ribbed newt).